Consider the following 557-residue polypeptide: Mercuric reductase (557 aa).

Positions 1–65 (MILLSIEGMT…AIEALGYIAK (65 aa)) constitute an HMA domain. 2 residues coordinate a metal cation: Cys11 and Cys14. Ala106 and Ala126 together coordinate FAD. A disulfide bond links Cys133 and Cys138. FAD is bound by residues Lys142, Ala207, Asp399, and Val407. Residues Cys554 and Cys555 each contribute to the Hg(2+) site.

Belongs to the class-I pyridine nucleotide-disulfide oxidoreductase family. In terms of assembly, homodimer. Requires FAD as cofactor.

It catalyses the reaction Hg + NADP(+) + H(+) = Hg(2+) + NADPH. In terms of biological role, resistance to Hg(2+) in bacteria appears to be governed by a specialized system which includes mercuric reductase. MerA protein is responsible for volatilizing mercury as Hg(0). The chain is Mercuric reductase (merA) from Shewanella putrefaciens (Pseudomonas putrefaciens).